Consider the following 294-residue polypeptide: Elongation factor Ts (294 aa).

An involved in Mg(2+) ion dislocation from EF-Tu region spans residues 80–83 (TDFV).

This sequence belongs to the EF-Ts family.

Its subcellular location is the cytoplasm. Associates with the EF-Tu.GDP complex and induces the exchange of GDP to GTP. It remains bound to the aminoacyl-tRNA.EF-Tu.GTP complex up to the GTP hydrolysis stage on the ribosome. This chain is Elongation factor Ts, found in Listeria innocua serovar 6a (strain ATCC BAA-680 / CLIP 11262).